Here is a 140-residue protein sequence, read N- to C-terminus: Transmembrane protein 234 homolog (140 aa).

A run of 4 helical transmembrane segments spans residues 14–34 (IYAV…NPFI), 64–84 (WQYL…VLTL), 88–108 (ELSL…AITA), and 116–136 (SGWK…ICGL).

It belongs to the TMEM234 family.

The protein resides in the membrane. The protein is Transmembrane protein 234 homolog of Anopheles gambiae (African malaria mosquito).